A 133-amino-acid polypeptide reads, in one-letter code: Small ribosomal subunit protein uS8 (133 aa).

It belongs to the universal ribosomal protein uS8 family. In terms of assembly, part of the 30S ribosomal subunit. Contacts proteins S5 and S12.

In terms of biological role, one of the primary rRNA binding proteins, it binds directly to 16S rRNA central domain where it helps coordinate assembly of the platform of the 30S subunit. This Amoebophilus asiaticus (strain 5a2) protein is Small ribosomal subunit protein uS8.